We begin with the raw amino-acid sequence, 545 residues long: Dual specificity calcium/calmodulin-dependent 3',5'-cyclic nucleotide phosphodiesterase 1A (545 aa).

Calmodulin-binding stretches follow at residues 24–44 (TEKM…QLEK) and 114–137 (EKPK…MYRK). Residues 142-522 (VGLTYPAAVI…ERWKELAAQG (381 aa)) enclose the PDEase domain. The Proton donor role is filled by His219. Zn(2+) is bound by residues His223, His259, Asp260, and Asp366. Position 260 (Asp260) interacts with Mg(2+). A disordered region spans residues 526–545 (LHKNSEELGNTEEKHADTRP).

This sequence belongs to the cyclic nucleotide phosphodiesterase family. PDE1 subfamily. As to quaternary structure, homodimer. Interacts with YWHAZ. Zn(2+) is required as a cofactor. It depends on Mg(2+) as a cofactor. As to expression, expressed in brain, kidney and testis.

The protein localises to the cell projection. It is found in the cilium. The protein resides in the flagellum. It catalyses the reaction a nucleoside 3',5'-cyclic phosphate + H2O = a nucleoside 5'-phosphate + H(+). It carries out the reaction 3',5'-cyclic GMP + H2O = GMP + H(+). The enzyme catalyses 3',5'-cyclic AMP + H2O = AMP + H(+). Its activity is regulated as follows. Type I PDE are activated by the binding of calmodulin in the presence of Ca(2+). Activated by the binding of calmodulin in the presence of Ca(2+). Functionally, calcium/calmodulin-dependent cyclic nucleotide phosphodiesterase with a dual specificity for the second messengers cGMP and cAMP, which are key regulators of many important physiological processes. Has a higher efficiency with cGMP compared to cAMP. This chain is Dual specificity calcium/calmodulin-dependent 3',5'-cyclic nucleotide phosphodiesterase 1A, found in Mus musculus (Mouse).